A 178-amino-acid polypeptide reads, in one-letter code: Small ribosomal subunit protein uS4 (178 aa).

An S4 RNA-binding domain is found at 104-166 (RRLQTIVFRK…SNSPMASENH (63 aa)). The segment at 158–178 (NSPMASENHPERTAATSEENQ) is disordered.

The protein belongs to the universal ribosomal protein uS4 family. Part of the 30S ribosomal subunit. Contacts protein S5. The interaction surface between S4 and S5 is involved in control of translational fidelity.

In terms of biological role, one of the primary rRNA binding proteins, it binds directly to 16S rRNA where it nucleates assembly of the body of the 30S subunit. With S5 and S12 plays an important role in translational accuracy. The protein is Small ribosomal subunit protein uS4 of Methanococcus maripaludis (strain DSM 14266 / JCM 13030 / NBRC 101832 / S2 / LL).